Here is a 262-residue protein sequence, read N- to C-terminus: Spindlin-Z (262 aa).

Residues Met-1–Arg-50 form a disordered region. Residues Met-27–Asn-38 show a composition bias toward basic residues.

Belongs to the SPIN/STSY family. In terms of tissue distribution, expressed in several tissues including testis.

It localises to the nucleus. Functionally, may play a role in mitosis. The protein is Spindlin-Z (SPINZ) of Gallus gallus (Chicken).